The primary structure comprises 313 residues: HPr kinase/phosphorylase (313 aa).

Active-site residues include His140 and Lys161. 155-162 (GNSGAGKS) serves as a coordination point for ATP. Ser162 is a binding site for Mg(2+). The active-site Proton acceptor; for phosphorylation activity. Proton donor; for dephosphorylation activity is Asp179. Residues 203 to 212 (IEVRGLGILN) are important for the catalytic mechanism of both phosphorylation and dephosphorylation. Mg(2+) is bound at residue Glu204. The active site involves Arg246. An important for the catalytic mechanism of dephosphorylation region spans residues 267–272 (PVAAGR).

Belongs to the HPrK/P family. Homohexamer. Mg(2+) serves as cofactor.

The enzyme catalyses [HPr protein]-L-serine + ATP = [HPr protein]-O-phospho-L-serine + ADP + H(+). It carries out the reaction [HPr protein]-O-phospho-L-serine + phosphate + H(+) = [HPr protein]-L-serine + diphosphate. In terms of biological role, catalyzes the ATP- as well as the pyrophosphate-dependent phosphorylation of a specific serine residue in HPr, a phosphocarrier protein of the phosphoenolpyruvate-dependent sugar phosphotransferase system (PTS). HprK/P also catalyzes the pyrophosphate-producing, inorganic phosphate-dependent dephosphorylation (phosphorolysis) of seryl-phosphorylated HPr (P-Ser-HPr). The protein is HPr kinase/phosphorylase of Azoarcus sp. (strain BH72).